We begin with the raw amino-acid sequence, 346 residues long: Phosphate acyltransferase (346 aa).

This sequence belongs to the PlsX family. Homodimer. Probably interacts with PlsY.

The protein localises to the cytoplasm. The enzyme catalyses a fatty acyl-[ACP] + phosphate = an acyl phosphate + holo-[ACP]. It functions in the pathway lipid metabolism; phospholipid metabolism. Catalyzes the reversible formation of acyl-phosphate (acyl-PO(4)) from acyl-[acyl-carrier-protein] (acyl-ACP). This enzyme utilizes acyl-ACP as fatty acyl donor, but not acyl-CoA. This Geotalea uraniireducens (strain Rf4) (Geobacter uraniireducens) protein is Phosphate acyltransferase.